Consider the following 319-residue polypeptide: 2,3,4,5-tetrahydropyridine-2,6-dicarboxylate N-succinyltransferase (319 aa).

Mg(2+) is bound by residues aspartate 167 and glutamate 184. Residue glutamate 200 is the Acyl-anhydride intermediate of the active site. Succinyl-CoA-binding positions include arginine 202, glycine 217, serine 220, alanine 243, 258-259 (EA), and lysine 278.

This sequence belongs to the type 2 tetrahydrodipicolinate N-succinyltransferase family. In terms of assembly, homotrimer.

Its subcellular location is the cytoplasm. The enzyme catalyses (S)-2,3,4,5-tetrahydrodipicolinate + succinyl-CoA + H2O = (S)-2-succinylamino-6-oxoheptanedioate + CoA. It functions in the pathway amino-acid biosynthesis; L-lysine biosynthesis via DAP pathway; LL-2,6-diaminopimelate from (S)-tetrahydrodipicolinate (succinylase route): step 1/3. In terms of biological role, catalyzes the conversion of the cyclic tetrahydrodipicolinate (THDP) into the acyclic N-succinyl-L-2-amino-6-oxopimelate using succinyl-CoA. The chain is 2,3,4,5-tetrahydropyridine-2,6-dicarboxylate N-succinyltransferase from Salinispora tropica (strain ATCC BAA-916 / DSM 44818 / JCM 13857 / NBRC 105044 / CNB-440).